Here is a 234-residue protein sequence, read N- to C-terminus: Sugar fermentation stimulation protein A (234 aa).

The H-T-H motif DNA-binding region spans 201-220 (LLSEAQNKGVEVLAYKAELS).

This sequence belongs to the SfsA family.

In terms of biological role, binds to DNA non-specifically. Could be a regulatory factor involved in maltose metabolism. This is Sugar fermentation stimulation protein A from Salmonella choleraesuis (strain SC-B67).